We begin with the raw amino-acid sequence, 207 residues long: Ribonuclease HII (207 aa).

Residues 18–207 enclose the RNase H type-2 domain; it reads GLVAGVDEAG…VAEVLREALP (190 aa). Residues aspartate 24, glutamate 25, and aspartate 116 each coordinate a divalent metal cation.

This sequence belongs to the RNase HII family. The cofactor is Mn(2+). Requires Mg(2+) as cofactor.

Its subcellular location is the cytoplasm. It carries out the reaction Endonucleolytic cleavage to 5'-phosphomonoester.. Its function is as follows. Endonuclease that specifically degrades the RNA of RNA-DNA hybrids. The protein is Ribonuclease HII of Albidiferax ferrireducens (strain ATCC BAA-621 / DSM 15236 / T118) (Rhodoferax ferrireducens).